The chain runs to 399 residues: Succinate--CoA ligase [ADP-forming] subunit beta (399 aa).

Residues K9 to E254 form the ATP-grasp domain. ATP contacts are provided by residues K46, G53–G55, V112, and E117. Mg(2+) is bound by residues N209 and D223. Residues N274 and G331–M333 contribute to the substrate site.

This sequence belongs to the succinate/malate CoA ligase beta subunit family. Heterotetramer of two alpha and two beta subunits. Mg(2+) is required as a cofactor.

It carries out the reaction succinate + ATP + CoA = succinyl-CoA + ADP + phosphate. The enzyme catalyses GTP + succinate + CoA = succinyl-CoA + GDP + phosphate. It participates in carbohydrate metabolism; tricarboxylic acid cycle; succinate from succinyl-CoA (ligase route): step 1/1. Its function is as follows. Succinyl-CoA synthetase functions in the citric acid cycle (TCA), coupling the hydrolysis of succinyl-CoA to the synthesis of either ATP or GTP and thus represents the only step of substrate-level phosphorylation in the TCA. The beta subunit provides nucleotide specificity of the enzyme and binds the substrate succinate, while the binding sites for coenzyme A and phosphate are found in the alpha subunit. The sequence is that of Succinate--CoA ligase [ADP-forming] subunit beta from Novosphingobium aromaticivorans (strain ATCC 700278 / DSM 12444 / CCUG 56034 / CIP 105152 / NBRC 16084 / F199).